The following is a 202-amino-acid chain: uncharacterized protein (202 aa).

Residues 1 to 6 (MITDFL) lie on the Cytoplasmic side of the membrane. A helical; Signal-anchor for type II membrane protein membrane pass occupies residues 7-23 (LAFSILAVSTTLGVSNL). Residues 24–202 (NKQCRDLLQC…KNGKTRGHSG (179 aa)) lie on the Extracellular side of the membrane. N53 is a glycosylation site (N-linked (GlcNAc...) asparagine).

The protein localises to the membrane. This is an uncharacterized protein from Caenorhabditis elegans.